Consider the following 514-residue polypeptide: uncharacterized protein (514 aa).

Over residues 1-15 (MSSPRGASSMSSRSP) the composition is skewed to low complexity. Residues 1 to 22 (MSSPRGASSMSSRSPVNLEPES) form a disordered region.

This is an uncharacterized protein from Ictaluridae (bullhead catfishes).